A 414-amino-acid chain; its full sequence is Ena/VASP-like protein (414 aa).

The WH1 domain occupies 1-112; sequence MSEQSICQAR…NAMLFALNIM (112 aa). S130 is modified (phosphoserine). The disordered stretch occupies residues 157 to 369; it reads ATGPILPPGH…SRVKPAGSVN (213 aa). Pro residues predominate over residues 179 to 204; sequence GPPPPPPPPVPPPPTGSTPPPPPPLP. Positions 217–228 are enriched in low complexity; sequence SASGLAAALAGA. Residues 220-240 form an EVH2 block A region; the sequence is GLAAALAGAKLRRVQRPEDAS. Residues 220 to 411 are EVH2; it reads GLAAALAGAK…DAIRQELSGI (192 aa). The KLKR motif lies at 229–232; it reads KLRR. Low complexity predominate over residues 240–251; that stretch reads SGGSSPSGTSKS. Residues S244 and S257 each carry the phosphoserine modification. Residues 263 to 280 form an EVH2 block B region; that stretch reads GGLMEEMNKLLAKRRKAA. Polar residues predominate over residues 297–318; sequence EDPSTSPSPGTRATSQPPNSSE. Phosphoserine is present on residues S302, S304, S327, S329, S339, S347, S352, and S367. Positions 319-329 are enriched in basic and acidic residues; it reads AGRKPWERSNS. A required for interaction with ZDHHC17 region spans residues 340–360; it reads RTPSVAKSPEAKSPLQSQPHS. Residues 377–411 are EVH2 block C; it reads DLDRMKQEILEEVVRELHKVKEEIIDAIRQELSGI.

Belongs to the Ena/VASP family. As to quaternary structure, homotetramer. Binds to the SH3 domains of ABL1, LYN and SRC. Also binds to profilin, with preference for isoform IIa of PFN2, and the WW domain of APBB1/FE65. Binds to SEMA6A. Interacts, via the Pro-rich region, with the C-terminal SH3 domain of DNMBP. Interacts with RAPH1. Binds, via the EVH1 domain, the Pro-rich domain of Listeria monocytogenes actA. Binds, via the EVH1 domain, the Pro-rich domain of ZYX. Interacts with FYB1. Interacts with ZDHHC17. In terms of processing, phosphorylated by PKA; phosphorylation abolishes binding to SH3 domains of ABL and SRC. As to expression, highest expression in thymus and spleen (at protein level). Low levels in placenta, ovary, testis, fat and lung (at protein level). Isoform 1 and isoform 2 are expressed in cortical neurons and glial cells.

It localises to the cytoplasm. Its subcellular location is the cytoskeleton. The protein resides in the stress fiber. The protein localises to the cell projection. It is found in the lamellipodium. Its function is as follows. Ena/VASP proteins are actin-associated proteins involved in a range of processes dependent on cytoskeleton remodeling and cell polarity such as axon guidance and lamellipodial and filopodial dynamics in migrating cells. EVL enhances actin nucleation and polymerization. The chain is Ena/VASP-like protein (Evl) from Mus musculus (Mouse).